Reading from the N-terminus, the 157-residue chain is Small ribosomal subunit protein uS7 (157 aa).

It belongs to the universal ribosomal protein uS7 family. As to quaternary structure, part of the 30S ribosomal subunit. Contacts proteins S9 and S11.

In terms of biological role, one of the primary rRNA binding proteins, it binds directly to 16S rRNA where it nucleates assembly of the head domain of the 30S subunit. Is located at the subunit interface close to the decoding center, probably blocks exit of the E-site tRNA. This Borrelia hermsii (strain HS1 / DAH) protein is Small ribosomal subunit protein uS7.